Consider the following 374-residue polypeptide: MADIDFPAELRALRALRATYDSIERVIDADSLRKDIAVLSEQAGVPDLWDNPAEAQKVTSKLSHAQSKLERLETLTARIDDLEVLVELAESEHDEDSLAEASKELVSLQKSLQELEVVTLLAGEYDEREAVVTIRSGAGGVDAADFAEMLLRMYLRWAERHGYPTSVLDTSYAEEAGLKSATFEVKAPYAFGTLSVEAGTHRLVRISPFDNQGRRQTSFAAVEVIPLIEQTDSIEIPDNDIRVDVFRSSGPGGQSVNTTDSAVRLTHLPTGTVVSMQNEKSQLQNRAAATRVLQSRLLLLKKQQEDAEKKALAGDVKASWGDQMRSYVLNPYQMVKDLRTEHEVGNTSGVLDGDIDDFIDAGIRWRANNRNAAE.

At Gln254 the chain carries N5-methylglutamine.

Belongs to the prokaryotic/mitochondrial release factor family. In terms of processing, methylated by PrmC. Methylation increases the termination efficiency of RF2.

Its subcellular location is the cytoplasm. In terms of biological role, peptide chain release factor 2 directs the termination of translation in response to the peptide chain termination codons UGA and UAA. This chain is Peptide chain release factor 2, found in Renibacterium salmoninarum (strain ATCC 33209 / DSM 20767 / JCM 11484 / NBRC 15589 / NCIMB 2235).